A 495-amino-acid chain; its full sequence is MFRSKRSGLVRRLWRSRVVPDREEGSGGGGGVDEDGSLGSRAEPAPRAREGGGCSRSEVRSVAPRRPRDAVGPRGAAIAGRRRRTGGLPRPVSESGAGAGGSPLDVAEPGGPGWLPESDCETVTCCLFSERDAAGAPRDSGDPQARQSPEPEEGGGPRSREARSRLLLLEQELKTVTYSLLKRLKERSLDTLLEAVESRGGVPGGCVLVPRADLRLGGQPAPPQLLLGRLFRWPDLQHAVELKPLCGCHSFTAAADGPTVCCNPYHFSRLCGPESPPPPYSRLSPPDQYKPLDLSDSTLSYTETEATNSLITAPGEFSDASMSPDATKPSHWCSVAYWEHRTRVGRLYAVYDQAVSIFYDLPQGSGFCLGQLNLEQRSESVRRTRSKIGFGILLSKEPDGVWAYNRGEHPIFVNSPTLDAPGGRALVVRKVPPGYSIKVFDFERSGLLQHADAAHGPYDPHSVRISFAKGWGPCYSRQFITSCPCWLEILLNNHR.

Positions 1-15 (MFRSKRSGLVRRLWR) are enriched in basic residues. Disordered stretches follow at residues 1–115 (MFRS…PGWL) and 133–161 (AAGA…RSRE). 2 positions are modified to dimethylated arginine; alternate: R74 and R81. R74 and R81 each carry omega-N-methylarginine; alternate. Residues 149 to 276 (PEPEEGGGPR…FSRLCGPESP (128 aa)) enclose the MH1 domain. Residue K174 forms a Glycyl lysine isopeptide (Lys-Gly) (interchain with G-Cter in ubiquitin) linkage. Residues C206, C248, C261, and H266 each contribute to the Zn(2+) site. One can recognise an MH2 domain in the interval 332 to 495 (WCSVAYWEHR…WLEILLNNHR (164 aa)). A Phosphoserine; by PRKX; in vitro modification is found at S436.

This sequence belongs to the dwarfin/SMAD family. Interacts with NEDD4L. Interacts with WWP1. Interacts with STAMBP and PRKX. Interacts with RNF111 and AXIN1. Interacts with TGF-beta type I receptor superfamily members, including ACVR1B, BMPR1B and TGFBR1. In response to BMP2 treatment, interacts with SMAD1; this interaction may inhibit SMAD1-binding to SMAD4. Interacts with HOXC8 and HOXC9. Interacts with PELI1; this interaction interferes with PELI1 complex formation with TRAF6, IRAK1, IRAK4 and MYD88 in response to IL1B and hence negatively regulates IL1R-TLR signaling. Interacts with TSC22D1/TSC-22. Monoubiquitinated at Lys-174 by the E2/E3 hybrid ubiquitin-protein ligase UBE2O, leading to reduced binding affinity for the activated BMP type I receptor ACVR1/ALK2, thereby enhancing BMP7 and regulating adipocyte differentiation. Ubiquitinated by WWP1. Ubiquitinated by ARK2C, promoting proteasomal degradation, leading to enhance the BMP-Smad signaling. In terms of processing, arginine methylation by PRMT1, which is recruited by BMPR2, initiates BMP-Induced signaling and induces dissociation from the BMPR1B receptor at the cell surface leading to derepress downstream Smad1/Smad5 signaling. Post-translationally, phosphorylated by BMP type 1 receptor kinase and by PRKX. In terms of tissue distribution, ubiquitous in various organs, with higher levels in lung.

The protein localises to the nucleus. Functionally, transforming growth factor-beta superfamily receptors signaling occurs through the Smad family of intracellular mediators. SMAD6 is an inhibitory Smad (i-Smad) that negatively regulates signaling downstream of type I transforming growth factor-beta. Acts as a mediator of TGF-beta and BMP anti-inflammatory activities. Suppresses IL1R-TLR signaling through its direct interaction with PEL1, preventing NF-kappa-B activation, nuclear transport and NF-kappa-B-mediated expression of pro-inflammatory genes. Blocks the BMP-SMAD1 signaling pathway by competing with SMAD4 for receptor-activated SMAD1-binding. Binds to regulatory elements in target promoter regions. This is Mothers against decapentaplegic homolog 6 (Smad6) from Mus musculus (Mouse).